Consider the following 540-residue polypeptide: Glucose-6-phosphate isomerase (540 aa).

The Proton donor role is filled by E350. Residues H381 and K503 contribute to the active site.

It belongs to the GPI family.

The protein localises to the cytoplasm. It carries out the reaction alpha-D-glucose 6-phosphate = beta-D-fructose 6-phosphate. The protein operates within carbohydrate biosynthesis; gluconeogenesis. It participates in carbohydrate degradation; glycolysis; D-glyceraldehyde 3-phosphate and glycerone phosphate from D-glucose: step 2/4. Catalyzes the reversible isomerization of glucose-6-phosphate to fructose-6-phosphate. The protein is Glucose-6-phosphate isomerase of Burkholderia orbicola (strain AU 1054).